A 56-amino-acid chain; its full sequence is Small ribosomal subunit protein bS21 (56 aa).

Belongs to the bacterial ribosomal protein bS21 family.

This is Small ribosomal subunit protein bS21 from Synechococcus sp. (strain WH7803).